Here is a 391-residue protein sequence, read N- to C-terminus: Probable sugar efflux transporter (391 aa).

The next 12 helical transmembrane spans lie at 16–36, 51–71, 82–102, 110–130, 138–158, 170–190, 210–230, 247–267, 277–297, 300–320, 338–358, and 361–381; these read VFVF…PVAL, VGLM…PLML, LLFL…AWNF, MGIA…VIRV, QALG…LPLG, TFGV…KLLP, PLLV…FTTY, ITTL…FLFG, FIAF…VFKN, WVIF…TIAL, IFSG…SIVI, and LGLE…LFWL.

The protein belongs to the major facilitator superfamily. SotB (TC 2.A.1.2) family.

The protein resides in the cell inner membrane. Its function is as follows. Involved in the efflux of sugars. The physiological role may be the reduction of the intracellular concentration of toxic sugars or sugar metabolites. In Helicobacter pylori (strain J99 / ATCC 700824) (Campylobacter pylori J99), this protein is Probable sugar efflux transporter.